A 580-amino-acid chain; its full sequence is Proline--tRNA ligase (580 aa).

This sequence belongs to the class-II aminoacyl-tRNA synthetase family. ProS type 1 subfamily. Homodimer.

It localises to the cytoplasm. The catalysed reaction is tRNA(Pro) + L-proline + ATP = L-prolyl-tRNA(Pro) + AMP + diphosphate. In terms of biological role, catalyzes the attachment of proline to tRNA(Pro) in a two-step reaction: proline is first activated by ATP to form Pro-AMP and then transferred to the acceptor end of tRNA(Pro). As ProRS can inadvertently accommodate and process non-cognate amino acids such as alanine and cysteine, to avoid such errors it has two additional distinct editing activities against alanine. One activity is designated as 'pretransfer' editing and involves the tRNA(Pro)-independent hydrolysis of activated Ala-AMP. The other activity is designated 'posttransfer' editing and involves deacylation of mischarged Ala-tRNA(Pro). The misacylated Cys-tRNA(Pro) is not edited by ProRS. This is Proline--tRNA ligase from Mycobacteroides abscessus (strain ATCC 19977 / DSM 44196 / CCUG 20993 / CIP 104536 / JCM 13569 / NCTC 13031 / TMC 1543 / L948) (Mycobacterium abscessus).